A 448-amino-acid polypeptide reads, in one-letter code: Glutamyl-tRNA reductase (448 aa).

Residues Thr-49 to Arg-52, Ser-109, Glu-114 to Gln-116, and Gln-120 contribute to the substrate site. Cys-50 serves as the catalytic Nucleophile. Gly-189–Ser-194 lines the NADP(+) pocket.

This sequence belongs to the glutamyl-tRNA reductase family. In terms of assembly, homodimer.

The catalysed reaction is (S)-4-amino-5-oxopentanoate + tRNA(Glu) + NADP(+) = L-glutamyl-tRNA(Glu) + NADPH + H(+). It functions in the pathway porphyrin-containing compound metabolism; protoporphyrin-IX biosynthesis; 5-aminolevulinate from L-glutamyl-tRNA(Glu): step 1/2. Its function is as follows. Catalyzes the NADPH-dependent reduction of glutamyl-tRNA(Glu) to glutamate 1-semialdehyde (GSA). The sequence is that of Glutamyl-tRNA reductase from Staphylococcus aureus (strain NCTC 8325 / PS 47).